Consider the following 182-residue polypeptide: uncharacterized protein (182 aa).

2 disordered regions span residues 17–53 (AVSQ…QGSK) and 128–159 (DSLG…PKRS). Over residues 42 to 53 (PQPQCPSAQGSK) the composition is skewed to polar residues. Over residues 129–138 (SLGSSASSSS) the composition is skewed to low complexity.

This is an uncharacterized protein from Homo sapiens (Human).